A 235-amino-acid chain; its full sequence is Orotidine 5'-phosphate decarboxylase (235 aa).

Residues Asp-17, Lys-39, Asp-66–Thr-75, Thr-121, Arg-182, Gln-191, Gly-211, and Arg-212 each bind substrate. Lys-68 serves as the catalytic Proton donor.

It belongs to the OMP decarboxylase family. Type 1 subfamily. Homodimer.

It catalyses the reaction orotidine 5'-phosphate + H(+) = UMP + CO2. Its pathway is pyrimidine metabolism; UMP biosynthesis via de novo pathway; UMP from orotate: step 2/2. Its function is as follows. Catalyzes the decarboxylation of orotidine 5'-monophosphate (OMP) to uridine 5'-monophosphate (UMP). The protein is Orotidine 5'-phosphate decarboxylase of Afipia carboxidovorans (strain ATCC 49405 / DSM 1227 / KCTC 32145 / OM5) (Oligotropha carboxidovorans).